The following is a 236-amino-acid chain: uncharacterized protein (236 aa).

Residues 186–236 are disordered; the sequence is HGRGDTRNLNDITGLGHERERDRENTHYEKKPKLDSDSEVDIRSFRQDMDL. Positions 201–236 are enriched in basic and acidic residues; it reads GHERERDRENTHYEKKPKLDSDSEVDIRSFRQDMDL. A Phosphoserine modification is found at S221.

This is an uncharacterized protein from Saccharomyces cerevisiae (strain ATCC 204508 / S288c) (Baker's yeast).